We begin with the raw amino-acid sequence, 509 residues long: MQQNMIIPSFWTGTAIIGLVACAYVSYQCLLSPLARFPGPFAAKLSKGWRAYKTANGQWHRKLVDLHRKYGHVVRIAPNELSVGDPSSFRKIYSPAEAGNGFNKAACYSVVQGNRPFDLTGERNEKVHSEQRKLVATAYSMSSMVHFESKVNVVIETVIHKLEARCRKTIDLGHWLQMWAFEPTRPLLNSLKPDVIGSVSFSQPFGYVESGDDEGVFKRIQNAMGSAAWLMHAGWLFRLHQKLIPICGNWLAVNDRNGYFFQVACREVSGRINRGGDDKDIIGQLLETQKIKPQLKDLDISFMMTSNVFAGSDSTSIAFQSIFYLLLTHPAAHDRLMRELREREEKGELSDPVSFQEAESWPYLQAIIYEAMRLYAPAAFVLDRVVPPEGMMIEDKFVPGNTVVGSSAWVIHRNPEIWGPDVDTFRPERWLDDSTFLIDKKGALQPFSFGPRNCLGRHLAYQEIKLALAKLVYHFDLELNPKCGDWDEQKNFTFWVKPPLWVNLHPVKS.

Residues 5 to 25 (MIIPSFWTGTAIIGLVACAYV) traverse the membrane as a helical segment. A heme-binding site is contributed by Cys-454. N-linked (GlcNAc...) asparagine glycosylation is present at Asn-491.

Belongs to the cytochrome P450 family. Heme serves as cofactor.

It is found in the membrane. It functions in the pathway secondary metabolite biosynthesis. Functionally, cytochrome P450 monooxygenase; part of the gene cluster that mediates the biosynthesis of heptelidic acid (HA), a sesquiterpene lactone that acts as an inhibitor of glyceraldehyde-3-phosphatedehydrogenase (GAPDH) and a growth inhibitor of the salt-tolerant lactic acid bacteria in soy sauce brewing. The sequence is that of Cytochrome P450 monooxygenase hepC from Aspergillus oryzae (strain ATCC 42149 / RIB 40) (Yellow koji mold).